Reading from the N-terminus, the 354-residue chain is Isocitrate dehydrogenase [NAD] regulatory subunit A, mitochondrial (354 aa).

Substrate contacts are provided by S95, N97, R101, R111, and R132. D219, D243, and D247 together coordinate Mg(2+). NADP(+) is bound by residues H276 to I282 and N289.

This sequence belongs to the isocitrate and isopropylmalate dehydrogenases family. Heterooligomer of catalytic and regulatory subunits. It depends on Mg(2+) as a cofactor. Mn(2+) is required as a cofactor.

The protein localises to the mitochondrion. The catalysed reaction is D-threo-isocitrate + NAD(+) = 2-oxoglutarate + CO2 + NADH. Functionally, performs an essential role in the oxidative function of the citric acid cycle. This chain is Isocitrate dehydrogenase [NAD] regulatory subunit A, mitochondrial (idhA), found in Dictyostelium discoideum (Social amoeba).